We begin with the raw amino-acid sequence, 286 residues long: Bifunctional protein FolD (286 aa).

Residues Gly166–Ser168, Ser191, and Ile232 contribute to the NADP(+) site.

It belongs to the tetrahydrofolate dehydrogenase/cyclohydrolase family. As to quaternary structure, homodimer.

The enzyme catalyses (6R)-5,10-methylene-5,6,7,8-tetrahydrofolate + NADP(+) = (6R)-5,10-methenyltetrahydrofolate + NADPH. It catalyses the reaction (6R)-5,10-methenyltetrahydrofolate + H2O = (6R)-10-formyltetrahydrofolate + H(+). It functions in the pathway one-carbon metabolism; tetrahydrofolate interconversion. Its function is as follows. Catalyzes the oxidation of 5,10-methylenetetrahydrofolate to 5,10-methenyltetrahydrofolate and then the hydrolysis of 5,10-methenyltetrahydrofolate to 10-formyltetrahydrofolate. The protein is Bifunctional protein FolD of Herpetosiphon aurantiacus (strain ATCC 23779 / DSM 785 / 114-95).